We begin with the raw amino-acid sequence, 64 residues long: Large ribosomal subunit protein bL33m (64 aa).

The protein belongs to the bacterial ribosomal protein bL33 family. In terms of assembly, component of the mitochondrial ribosome large subunit (39S) which comprises a 16S rRNA and about 50 distinct proteins.

The protein localises to the mitochondrion. This Drosophila melanogaster (Fruit fly) protein is Large ribosomal subunit protein bL33m (mRpL33).